The following is a 278-amino-acid chain: ATP synthase subunit a (278 aa).

The next 6 helical transmembrane spans lie at Phe41–Phe61, Leu108–Val128, Ile149–Ile168, Phe180–Ile200, Leu222–Pro242, and Ala244–Ile264.

This sequence belongs to the ATPase A chain family. As to quaternary structure, F-type ATPases have 2 components, CF(1) - the catalytic core - and CF(0) - the membrane proton channel. CF(1) has five subunits: alpha(3), beta(3), gamma(1), delta(1), epsilon(1). CF(0) has three main subunits: a(1), b(2) and c(9-12). The alpha and beta chains form an alternating ring which encloses part of the gamma chain. CF(1) is attached to CF(0) by a central stalk formed by the gamma and epsilon chains, while a peripheral stalk is formed by the delta and b chains.

The protein resides in the cell membrane. In terms of biological role, key component of the proton channel; it plays a direct role in the translocation of protons across the membrane. This is ATP synthase subunit a from Wigglesworthia glossinidia brevipalpis.